Reading from the N-terminus, the 195-residue chain is ATP synthase subunit b (195 aa).

Residues 28–48 form a helical membrane-spanning segment; the sequence is IFPNVYVLIAHVISLIFLLLL.

Belongs to the ATPase B chain family. As to quaternary structure, F-type ATPases have 2 components, F(1) - the catalytic core - and F(0) - the membrane proton channel. F(1) has five subunits: alpha(3), beta(3), gamma(1), delta(1), epsilon(1). F(0) has three main subunits: a(1), b(2) and c(10-14). The alpha and beta chains form an alternating ring which encloses part of the gamma chain. F(1) is attached to F(0) by a central stalk formed by the gamma and epsilon chains, while a peripheral stalk is formed by the delta and b chains.

The protein resides in the cell membrane. F(1)F(0) ATP synthase produces ATP from ADP in the presence of a proton or sodium gradient. F-type ATPases consist of two structural domains, F(1) containing the extramembraneous catalytic core and F(0) containing the membrane proton channel, linked together by a central stalk and a peripheral stalk. During catalysis, ATP synthesis in the catalytic domain of F(1) is coupled via a rotary mechanism of the central stalk subunits to proton translocation. In terms of biological role, component of the F(0) channel, it forms part of the peripheral stalk, linking F(1) to F(0). The sequence is that of ATP synthase subunit b from Malacoplasma penetrans (strain HF-2) (Mycoplasma penetrans).